Reading from the N-terminus, the 909-residue chain is UPF0182 protein H16_A1615 (909 aa).

7 consecutive transmembrane segments (helical) span residues 16–36 (TWVV…GLVV), 58–78 (ALLF…SGWL), 114–134 (VAVL…AIAL), 169–189 (WLLL…GLRG), 205–225 (ATHG…SYWL), 246–266 (VHVG…AAAA), and 281–301 (AAAL…PALF).

It belongs to the UPF0182 family.

Its subcellular location is the cell membrane. The polypeptide is UPF0182 protein H16_A1615 (Cupriavidus necator (strain ATCC 17699 / DSM 428 / KCTC 22496 / NCIMB 10442 / H16 / Stanier 337) (Ralstonia eutropha)).